The following is a 546-amino-acid chain: Probable protein kinase UbiB (546 aa).

The 379-residue stretch at 124 to 502 (DFDIQPLASA…HVRQSQSRYL (379 aa)) folds into the Protein kinase domain. Residues 130–138 (LASASIAQV) and K153 each bind ATP. D288 (proton acceptor) is an active-site residue. 2 helical membrane-spanning segments follow: residues 501–521 (YLLGIGATLLLSGSFLLVNRP) and 522–542 (EWGLMPSWLMVGGVVVWLVGW).

This sequence belongs to the ABC1 family. UbiB subfamily.

It localises to the cell inner membrane. The protein operates within cofactor biosynthesis; ubiquinone biosynthesis [regulation]. Its function is as follows. Is probably a protein kinase regulator of UbiI activity which is involved in aerobic coenzyme Q (ubiquinone) biosynthesis. This chain is Probable protein kinase UbiB, found in Salmonella gallinarum (strain 287/91 / NCTC 13346).